The primary structure comprises 265 residues: Serine protease harobin (265 aa).

An N-terminal signal peptide occupies residues 1–18 (MPLIRVLASLLILQLSYG). The propeptide occupies 19–33 (KSLDNGAKAITSLDR). Residues 34 to 257 (IIGGFECNPS…YKDWIEGIIA (224 aa)) form the Peptidase S1 domain. 7 disulfide bridges follow: Cys-40–Cys-172, Cys-59–Cys-75, Cys-106–Cys-152, Cys-107–Cys-264, Cys-151–Cys-218, Cys-183–Cys-197, and Cys-208–Cys-233. Residue His-74 is the Charge relay system of the active site. A glycan (N-linked (GlcNAc...) asparagine) is linked at Asn-112. The active-site Charge relay system is the Asp-119. An N-linked (GlcNAc...) asparagine glycan is attached at Asn-130. Ser-212 acts as the Charge relay system in catalysis.

It belongs to the peptidase S1 family. Snake venom subfamily. In terms of assembly, monomer. Post-translationally, harobin contains three additional Cys residues than other snake venom serine proteases, suggesting an additional disulfide bond. In addition, it is more stable than other snake 6-disulfide-bond serine proteases, since it is less sensitive to DTT. In terms of tissue distribution, expressed by the venom gland.

It localises to the secreted. Inhibited by PMSF. Functionally, serine protein with fibrinolytic and fibrinogenolytic activities. Degrades Bbeta-chain (FGB) of fibrinogen first and then the Aalpha-chain (FGA). Gamma-chain (FGG) are also digested on prolonged incubation. In vitro, it cleaves high molecular weight (HMW) kininogen (KNG) releasing bradykinin that promotes vasodilation. In vitro and in vivo, it cleaves angiotensin-2 (AGT). This explains the reduction of blood pressure in hypertensive rats. Also has antithrombotic effects on thrombosis animal models. This chain is Serine protease harobin, found in Hydrophis hardwickii (Hardwick's spine-bellied seasnake).